A 592-amino-acid polypeptide reads, in one-letter code: K(+) efflux antiporter 4 (592 aa).

An N-terminal signal peptide occupies residues 1-35 (MRRCKNNTDKFSVITMRLLTLLLICTFFFFFSFAY). Transmembrane regions (helical) follow at residues 169-189 (LISD…AFAC), 193-213 (PVIT…LSFV), 221-241 (TVAQ…FSAA), 248-268 (AVAI…SGIT), 279-299 (GIFV…KFLM), 313-333 (VGTL…LPVL), 343-363 (VLSM…LFVL), 388-408 (LAAV…GLSL), 437-457 (NFFA…HFLW), 462-482 (ILLA…AIVV), 491-511 (TAVL…VLLS), and 535-555 (LVTT…GVLL).

It belongs to the monovalent cation:proton antiporter 2 (CPA2) transporter (TC 2.A.37) family. KEA (TC 2.A.37.1) subfamily. As to expression, expressed in roots, stems, leaves, flowers and silique.

Its subcellular location is the golgi apparatus membrane. The protein resides in the golgi apparatus. The protein localises to the trans-Golgi network membrane. It localises to the prevacuolar compartment membrane. It is found in the endomembrane system. The catalysed reaction is K(+)(in) + H(+)(out) = K(+)(out) + H(+)(in). In terms of biological role, electroneutral K(+)/H(+) efflux antiporter involved in K(+) homeostasis and osmotic adjustment. Together with KEA5 and KEA6, promotes growth and development, and facilitates endosomal pH and ions homeostasis, as well as salt tolerance (e.g. K(+), NaCl and LiCl), probably by supporting cell wall biosynthesis during rapid etiolated seedling growth. This chain is K(+) efflux antiporter 4, found in Arabidopsis thaliana (Mouse-ear cress).